The following is a 652-amino-acid chain: MPSGSSAALALALAAAPAPLPQPPPLPPPPPAGGPELEGDGLLLRERLAALGLDDPSPAEPGAPALRAAAVAAAAAAQCQARRATGLAPEEPGRLATSETAELELEVDEEEGEEAELDGELLEEEELEEAEEEDRPSLLLLSPPAATASQTQPIPGGPLGSVLLPAAGFDAREAAAAGVLYGGDDAQGMMAAMLSHAYGPGGGGAAAAALNGEQAALLRRKSVNTTECVPVPSSEHVAEIVGRQGCKIKALRAKTNTYIKTPVRGEEPIFVVTGRKEDVAMAKREILSAAEHFSMIRASRNKNGPALGGLSCSPNLPGQTTVQVRVPYRVVGLVVGPKGATIKRIQQQTHTYIVTPSRDKEPVFEVTGMPENVDRAREEIEMHIAMRTGNYIELNEENDFHYNGTDVSFEGGTLGSAWLSSNPVPPSRARMMSNYRNDSSSSLGSGSTDSYFGSNRLADFSPTSPFSTGNFWFGDTLPSVGSEDLTVDSPAFDSLPTSAQTIWTPFEPVNPLSGFGSDPSGNMKTQRRGSQPSTPRLSPTFPESIEHPLARRVRSDPPSTGNHVGLPIYIPAFSNGTNSYSSSNGGSTSSSPPESRRKHDCVICFENEVIAALVPCGHNLFCMECANKICEKRTPSCPVCQTAVTQAIQIHS.

Disordered stretches follow at residues 15–39 (AAPA…ELEG) and 80–136 (QARR…EDRP). A compositionally biased stretch (pro residues) spans 18-33 (APLPQPPPLPPPPPAG). Residues 101 to 134 (AELELEVDEEEGEEAELDGELLEEEELEEAEEED) are compositionally biased toward acidic residues. KH domains lie at 225–286 (TTEC…KREI) and 319–380 (QTTV…REEI). Disordered regions lie at residues 429 to 448 (ARMM…SGST) and 506 to 566 (FEPV…HVGL). Residues 430–448 (RMMSNYRNDSSSSLGSGST) are compositionally biased toward low complexity. Residues 519-537 (PSGNMKTQRRGSQPSTPRL) are compositionally biased toward polar residues. Phosphoserine is present on residues S530 and S538. Residues 544-555 (SIEHPLARRVRS) are compositionally biased toward basic and acidic residues. The segment at 601–641 (CVICFENEVIAALVPCGHNLFCMECANKICEKRTPSCPVCQ) adopts an RING-type zinc-finger fold.

In terms of assembly, interacts with USP7, which antagonizes the ability to degrade mRNA. Phosphorylated.

The protein localises to the nucleus. It is found in the cytoplasm. The enzyme catalyses S-ubiquitinyl-[E2 ubiquitin-conjugating enzyme]-L-cysteine + [acceptor protein]-L-lysine = [E2 ubiquitin-conjugating enzyme]-L-cysteine + N(6)-ubiquitinyl-[acceptor protein]-L-lysine.. In terms of biological role, RNA-binding protein. May be involved in post-transcriptional regulatory mechanisms, modulating levels of some mRNAs by promoting their degradation in a way involving ubiquitin ligase activity. May act as suppressor of replication stress and chromosome missegregation. In Mus musculus (Mouse), this protein is RNA-binding E3 ubiquitin-protein ligase MEX3C (Mex3c).